Here is a 742-residue protein sequence, read N- to C-terminus: Zinc finger protein 280C (742 aa).

Glycyl lysine isopeptide (Lys-Gly) (interchain with G-Cter in SUMO2) cross-links involve residues lysine 10, lysine 23, lysine 42, lysine 65, lysine 85, lysine 123, and lysine 135. Over residues 138 to 168 (FTKTSPQEDSGACSVSQSDSTQDIPSSNILQ) the composition is skewed to polar residues. The disordered stretch occupies residues 138 to 243 (FTKTSPQEDS…QSAPGSSSLR (106 aa)). Residues lysine 180, lysine 186, and lysine 193 each participate in a glycyl lysine isopeptide (Lys-Gly) (interchain with G-Cter in SUMO2) cross-link. Positions 182-191 (PSTSKVNSVN) are enriched in polar residues. Residues 200–222 (SISETRPCSSSSSQTAPSGASSQ) are compositionally biased toward low complexity. Residues 223–243 (TVLSNVNTSSVQSAPGSSSLR) show a composition bias toward polar residues. C2H2-type zinc fingers lie at residues 323-345 (FKCF…MKHH), 360-383 (TTCQ…ESTH), 390-413 (TICK…KDTH), 420-443 (YICQ…RSSH), and 477-499 (YRCP…KLEH). The span at 523-578 (LGSSQSRASSPPSSTIPSTSLQLSVPKSKSTTTKNNSKVSANKATTTSPQTVATTT) shows a compositional bias: low complexity. Positions 523–608 (LGSSQSRASS…YKQKRQRTRK (86 aa)) are disordered. A compositionally biased stretch (polar residues) spans 579-592 (GKPSASKPGTGTTK). Lysine 580 participates in a covalent cross-link: Glycyl lysine isopeptide (Lys-Gly) (interchain with G-Cter in SUMO2). Residues 593–608 (SKAKPSYKQKRQRTRK) show a composition bias toward basic residues.

Its subcellular location is the nucleus. May function as a transcription factor. This chain is Zinc finger protein 280C (Znf280c), found in Mus musculus (Mouse).